The primary structure comprises 223 residues: uncharacterized protein (223 aa).

A disordered region spans residues 40–70 (GSKRLKPAKFGTEGKERVEQRTERQRTGSSK). Basic and acidic residues predominate over residues 51 to 70 (TEGKERVEQRTERQRTGSSK).

This is an uncharacterized protein from Homo sapiens (Human).